The chain runs to 112 residues: SRA stem-loop-interacting RNA-binding protein, mitochondrial (112 aa).

Position 15 is a phosphoserine (Ser-15). The 80-residue stretch at 19-98 (PIAFVRKIPW…IHVQAQRAKA (80 aa)) folds into the RRM domain. Thr-104 is modified (phosphothreonine). Position 105 is a phosphoserine (Ser-105).

The protein resides in the mitochondrion. The protein localises to the nucleus. Functionally, RNA-binding protein that acts as a nuclear receptor corepressor. Probably acts by binding the SRA RNA, and repressing the SRA-mediated nuclear receptor coactivation. Binds the STR7 loop of SRA RNA. Also able to repress glucocorticoid (GR), androgen (AR), thyroid (TR) and VDR-mediated transactivation. This Mus musculus (Mouse) protein is SRA stem-loop-interacting RNA-binding protein, mitochondrial (Slirp).